A 469-amino-acid polypeptide reads, in one-letter code: Neuraminidase (469 aa).

Residues 1-6 lie on the Intravirion side of the membrane; it reads MNPNQK. A helical transmembrane segment spans residues 7–29; it reads IITIGSVSLTIATVCFLMQIAIL. The segment at 11 to 33 is involved in apical transport and lipid raft association; sequence GSVSLTIATVCFLMQIAILATTV. Residues 30–469 lie on the Virion surface side of the membrane; it reads ATTVTLHFKQ…DGANINFMPI (440 aa). Positions 36-88 are hypervariable stalk region; that stretch reads HFKQNECNPPANNQVVPCEPIIIERNITEIVYLNNITIEKEVCPEVAEYRNWS. Residues N61, N70, and N86 are each glycosylated (N-linked (GlcNAc...) asparagine; by host). Positions 91–469 are head of neuraminidase; that stretch reads QCQITGFAPF…DGANINFMPI (379 aa). 8 disulfide bridges follow: C92-C417, C124-C129, C183-C230, C232-C237, C278-C291, C280-C289, C318-C337, and C421-C447. Residue R118 participates in substrate binding. Residue N146 is glycosylated (N-linked (GlcNAc...) asparagine; by host). D151 functions as the Proton donor/acceptor in the catalytic mechanism. R152 is a binding site for substrate. Residues N200 and N234 are each glycosylated (N-linked (GlcNAc...) asparagine; by host). A substrate-binding site is contributed by 276–277; it reads EE. R292 contributes to the substrate binding site. Residues D293, G297, and D324 each coordinate Ca(2+). The segment at 324–349 is disordered; it reads DTPRSDDSSSNSNCRDPNNERGNPGV. Residue R371 participates in substrate binding. N402 is a glycosylation site (N-linked (GlcNAc...) asparagine; by host). The active-site Nucleophile is Y406.

Belongs to the glycosyl hydrolase 34 family. Homotetramer. Ca(2+) serves as cofactor. Post-translationally, N-glycosylated.

It is found in the virion membrane. The protein resides in the host apical cell membrane. It catalyses the reaction Hydrolysis of alpha-(2-&gt;3)-, alpha-(2-&gt;6)-, alpha-(2-&gt;8)- glycosidic linkages of terminal sialic acid residues in oligosaccharides, glycoproteins, glycolipids, colominic acid and synthetic substrates.. Inhibited by the neuraminidase inhibitors zanamivir (Relenza) and oseltamivir (Tamiflu). These drugs interfere with the release of progeny virus from infected cells and are effective against all influenza strains. Resistance to neuraminidase inhibitors is quite rare. Its function is as follows. Catalyzes the removal of terminal sialic acid residues from viral and cellular glycoconjugates. Cleaves off the terminal sialic acids on the glycosylated HA during virus budding to facilitate virus release. Additionally helps virus spread through the circulation by further removing sialic acids from the cell surface. These cleavages prevent self-aggregation and ensure the efficient spread of the progeny virus from cell to cell. Otherwise, infection would be limited to one round of replication. Described as a receptor-destroying enzyme because it cleaves a terminal sialic acid from the cellular receptors. May facilitate viral invasion of the upper airways by cleaving the sialic acid moieties on the mucin of the airway epithelial cells. Likely to plays a role in the budding process through its association with lipid rafts during intracellular transport. May additionally display a raft-association independent effect on budding. Plays a role in the determination of host range restriction on replication and virulence. Sialidase activity in late endosome/lysosome traffic seems to enhance virus replication. The polypeptide is Neuraminidase (Influenza A virus (strain A/Turkey/Wisconsin/1/1966 H9N2)).